We begin with the raw amino-acid sequence, 371 residues long: 3-isopropylmalate dehydrogenase (371 aa).

77–90 (GPKWDDNPPHLRPE) contributes to the NAD(+) binding site. 4 residues coordinate substrate: arginine 97, arginine 107, arginine 135, and aspartate 224. Residues aspartate 224, aspartate 248, and aspartate 252 each contribute to the Mg(2+) site. 282–294 (GSAPDIAGMNKAN) provides a ligand contact to NAD(+).

This sequence belongs to the isocitrate and isopropylmalate dehydrogenases family. LeuB type 1 subfamily. As to quaternary structure, homodimer. It depends on Mg(2+) as a cofactor. Requires Mn(2+) as cofactor.

Its subcellular location is the cytoplasm. It carries out the reaction (2R,3S)-3-isopropylmalate + NAD(+) = 4-methyl-2-oxopentanoate + CO2 + NADH. It functions in the pathway amino-acid biosynthesis; L-leucine biosynthesis; L-leucine from 3-methyl-2-oxobutanoate: step 3/4. Functionally, catalyzes the oxidation of 3-carboxy-2-hydroxy-4-methylpentanoate (3-isopropylmalate) to 3-carboxy-4-methyl-2-oxopentanoate. The product decarboxylates to 4-methyl-2 oxopentanoate. The protein is 3-isopropylmalate dehydrogenase of Geobacillus kaustophilus (strain HTA426).